The chain runs to 110 residues: Protein RnfH (110 aa).

The disordered stretch occupies residues 86–110 (RKRAAQQAKDQEEKKKAEKSANKEN). The span at 94 to 110 (KDQEEKKKAEKSANKEN) shows a compositional bias: basic and acidic residues.

It belongs to the UPF0125 (RnfH) family.

The polypeptide is Protein RnfH (Mannheimia succiniciproducens (strain KCTC 0769BP / MBEL55E)).